Consider the following 167-residue polypeptide: NADPH-dependent 7-cyano-7-deazaguanine reductase (167 aa).

The tract at residues 1–24 is disordered; that stretch reads MTTRSQDQTRDLKVLGTGRLTSPE. The active-site Thioimide intermediate is the C57. D64 (proton donor) is an active-site residue. Residues 79 to 81 and 98 to 99 each bind substrate; these read VES and ME.

This sequence belongs to the GTP cyclohydrolase I family. QueF type 1 subfamily.

The protein resides in the cytoplasm. It carries out the reaction 7-aminomethyl-7-carbaguanine + 2 NADP(+) = 7-cyano-7-deazaguanine + 2 NADPH + 3 H(+). Its pathway is tRNA modification; tRNA-queuosine biosynthesis. Its function is as follows. Catalyzes the NADPH-dependent reduction of 7-cyano-7-deazaguanine (preQ0) to 7-aminomethyl-7-deazaguanine (preQ1). This Desulfovibrio desulfuricans (strain ATCC 27774 / DSM 6949 / MB) protein is NADPH-dependent 7-cyano-7-deazaguanine reductase.